A 52-amino-acid chain; its full sequence is Defensin-like protein 2B (52 aa).

4 disulfide bridges follow: Cys4–Cys52, Cys16–Cys37, Cys22–Cys46, and Cys26–Cys48.

Forms oligomers in its native state.

Possesses antifungal activity sensitive to inorganic cations. The sequence is that of Defensin-like protein 2B from Sinapis alba (White mustard).